The primary structure comprises 188 residues: Probable nicotinate-nucleotide adenylyltransferase (188 aa).

The protein belongs to the NadD family.

The catalysed reaction is nicotinate beta-D-ribonucleotide + ATP + H(+) = deamido-NAD(+) + diphosphate. It functions in the pathway cofactor biosynthesis; NAD(+) biosynthesis; deamido-NAD(+) from nicotinate D-ribonucleotide: step 1/1. Its function is as follows. Catalyzes the reversible adenylation of nicotinate mononucleotide (NaMN) to nicotinic acid adenine dinucleotide (NaAD). The polypeptide is Probable nicotinate-nucleotide adenylyltransferase (Listeria monocytogenes serotype 4b (strain F2365)).